The following is a 360-amino-acid chain: Phospho-N-acetylmuramoyl-pentapeptide-transferase (360 aa).

Transmembrane regions (helical) follow at residues 27–47 (ILSIITALTISLWMGPKLIAW), 73–93 (TMGGIMILTAISVTVFLWADL), 94–114 (TNPYVWAVMFVLLGYGAVGFV), 132–152 (WKYFWQSSIALVVAFALYAYG), 168–188 (VMPQLGLAYILLTYFVIVGTS), 199–219 (GLAIMPTVFVAAGFAFIAWAT), 236–256 (ASELVVVCAAIVGAGFGFLWF), 263–283 (VFMGDVGSLALGGALGTIAVL), 288–308 (FLLVIMGGVFVVETLSVILQV), and 338–358 (VIVRFWIISMLLVLIALATLK).

Belongs to the glycosyltransferase 4 family. MraY subfamily. Mg(2+) serves as cofactor.

It localises to the cell inner membrane. It catalyses the reaction UDP-N-acetyl-alpha-D-muramoyl-L-alanyl-gamma-D-glutamyl-meso-2,6-diaminopimeloyl-D-alanyl-D-alanine + di-trans,octa-cis-undecaprenyl phosphate = di-trans,octa-cis-undecaprenyl diphospho-N-acetyl-alpha-D-muramoyl-L-alanyl-D-glutamyl-meso-2,6-diaminopimeloyl-D-alanyl-D-alanine + UMP. It participates in cell wall biogenesis; peptidoglycan biosynthesis. In terms of biological role, catalyzes the initial step of the lipid cycle reactions in the biosynthesis of the cell wall peptidoglycan: transfers peptidoglycan precursor phospho-MurNAc-pentapeptide from UDP-MurNAc-pentapeptide onto the lipid carrier undecaprenyl phosphate, yielding undecaprenyl-pyrophosphoryl-MurNAc-pentapeptide, known as lipid I. The sequence is that of Phospho-N-acetylmuramoyl-pentapeptide-transferase from Aliivibrio fischeri (strain MJ11) (Vibrio fischeri).